A 161-amino-acid polypeptide reads, in one-letter code: Cyclic pyranopterin monophosphate synthase (161 aa).

Residues 75–77 (LCH) and 113–114 (ME) contribute to the substrate site. Asp128 is a catalytic residue.

It belongs to the MoaC family. In terms of assembly, homohexamer; trimer of dimers.

It carries out the reaction (8S)-3',8-cyclo-7,8-dihydroguanosine 5'-triphosphate = cyclic pyranopterin phosphate + diphosphate. The protein operates within cofactor biosynthesis; molybdopterin biosynthesis. Catalyzes the conversion of (8S)-3',8-cyclo-7,8-dihydroguanosine 5'-triphosphate to cyclic pyranopterin monophosphate (cPMP). This Citrobacter koseri (strain ATCC BAA-895 / CDC 4225-83 / SGSC4696) protein is Cyclic pyranopterin monophosphate synthase.